The chain runs to 350 residues: Nicotinate-nucleotide--dimethylbenzimidazole phosphoribosyltransferase (350 aa).

The active-site Proton acceptor is the Glu317.

It belongs to the CobT family.

The enzyme catalyses 5,6-dimethylbenzimidazole + nicotinate beta-D-ribonucleotide = alpha-ribazole 5'-phosphate + nicotinate + H(+). It functions in the pathway nucleoside biosynthesis; alpha-ribazole biosynthesis; alpha-ribazole from 5,6-dimethylbenzimidazole: step 1/2. In terms of biological role, catalyzes the synthesis of alpha-ribazole-5'-phosphate from nicotinate mononucleotide (NAMN) and 5,6-dimethylbenzimidazole (DMB). This Shewanella oneidensis (strain ATCC 700550 / JCM 31522 / CIP 106686 / LMG 19005 / NCIMB 14063 / MR-1) protein is Nicotinate-nucleotide--dimethylbenzimidazole phosphoribosyltransferase.